The following is a 594-amino-acid chain: Arrestin domain-containing protein C584.15c (594 aa).

The span at 368–398 (NPQLQSGFTTPNLSRRNSSDFGPNSPVNIHS) shows a compositional bias: polar residues. Disordered regions lie at residues 368 to 417 (NPQL…NSNA) and 531 to 594 (EATR…RGVR). A compositionally biased stretch (low complexity) spans 404–417 (SGQQPSSPASNSNA). Positions 534 to 552 (RPSSPTESVEIPSNTTTIA) are enriched in polar residues. The segment covering 565–574 (PSTPAPPLPS) has biased composition (pro residues). A Phosphoserine modification is found at Ser-584.

The protein belongs to the arrestin family.

The sequence is that of Arrestin domain-containing protein C584.15c from Schizosaccharomyces pombe (strain 972 / ATCC 24843) (Fission yeast).